The chain runs to 211 residues: Peroxiredoxin (211 aa).

The 155-residue stretch at 2–156 (PLIGDKFPEM…IVRMIRAFRV (155 aa)) folds into the Thioredoxin domain. The active-site Cysteine sulfenic acid (-SOH) intermediate is cysteine 44. A substrate-binding site is contributed by arginine 119. The cysteines at positions 198 and 204 are disulfide-linked.

The protein belongs to the peroxiredoxin family. Prx6 subfamily. Homodecamer. Pentamer of dimers that assemble into a ring structure.

Its subcellular location is the cytoplasm. The enzyme catalyses a hydroperoxide + [thioredoxin]-dithiol = an alcohol + [thioredoxin]-disulfide + H2O. In terms of biological role, thiol-specific peroxidase that catalyzes the reduction of hydrogen peroxide and organic hydroperoxides to water and alcohols, respectively. Plays a role in cell protection against oxidative stress by detoxifying peroxides. This is Peroxiredoxin from Methanothermobacter marburgensis (strain ATCC BAA-927 / DSM 2133 / JCM 14651 / NBRC 100331 / OCM 82 / Marburg) (Methanobacterium thermoautotrophicum).